Reading from the N-terminus, the 601-residue chain is Elongation factor 4 (601 aa).

One can recognise a tr-type G domain in the interval 7-189 (KHTRNFSIVA…AIVEKVPVPD (183 aa)). GTP contacts are provided by residues 19 to 24 (DHGKST) and 136 to 139 (NKID).

The protein belongs to the TRAFAC class translation factor GTPase superfamily. Classic translation factor GTPase family. LepA subfamily.

The protein resides in the cell membrane. The enzyme catalyses GTP + H2O = GDP + phosphate + H(+). Its function is as follows. Required for accurate and efficient protein synthesis under certain stress conditions. May act as a fidelity factor of the translation reaction, by catalyzing a one-codon backward translocation of tRNAs on improperly translocated ribosomes. Back-translocation proceeds from a post-translocation (POST) complex to a pre-translocation (PRE) complex, thus giving elongation factor G a second chance to translocate the tRNAs correctly. Binds to ribosomes in a GTP-dependent manner. In Clostridium novyi (strain NT), this protein is Elongation factor 4.